Reading from the N-terminus, the 206-residue chain is Transmembrane emp24 domain-containing protein bai (206 aa).

The N-terminal stretch at 1–20 (MLKVLYVIFTIFGYIWPIYS) is a signal peptide. The Lumenal portion of the chain corresponds to 21-172 (VMFHLTPNTQ…RDTNEKTNSR (152 aa)). One can recognise a GOLD domain in the interval 30–140 (QKCLKEDIQA…LKPLEVDLKR (111 aa)). The chain crosses the membrane as a helical span at residues 173–193 (VLFFSIFSMCCLLGLATWQVL). Residues 194 to 206 (YLRRYFKAKKLIE) lie on the Cytoplasmic side of the membrane.

It belongs to the EMP24/GP25L family.

It localises to the membrane. In terms of biological role, eca and bai are essential, though not redundant, for dorsoventral patterning of the embryo. Specifically required during early embryogenesis for the activity of maternal tkv, while the zygotic tkv is not affected. The sequence is that of Transmembrane emp24 domain-containing protein bai from Drosophila virilis (Fruit fly).